Consider the following 345-residue polypeptide: NADH-quinone oxidoreductase subunit 8 (345 aa).

8 helical membrane passes run 15–35, 82–102, 115–135, 161–181, 190–210, 240–262, 278–298, and 309–329; these read MLLQ…FMVY, FVYF…FVVI, VGIL…IMGG, LGLI…TAIV, LLNW…VSAL, YLLF…SLLF, WWMV…KAIV, and IGWK…AILA.

This sequence belongs to the complex I subunit 1 family. In terms of assembly, NDH-1 is composed of at least 14 different subunits, Nqo1 to Nqo14. The complex has a L-shaped structure, with the hydrophobic arm (subunits Nqo7, Nqo8, Nqo10 to Nqo14) embedded in the inner membrane and the hydrophilic peripheral arm (subunits Nqo1 to Nqo6, Nqo9) protruding into the bacterial cytoplasm. The hydrophilic domain contains all the redox centers.

It localises to the cell inner membrane. It carries out the reaction a quinone + NADH + 5 H(+)(in) = a quinol + NAD(+) + 4 H(+)(out). In terms of biological role, NDH-1 shuttles electrons from NADH, via FMN and iron-sulfur (Fe-S) centers, to quinones in the respiratory chain. The immediate electron acceptor for the enzyme in this species is believed to be ubiquinone. Couples the redox reaction to proton translocation (for every two electrons transferred, four hydrogen ions are translocated across the cytoplasmic membrane), and thus conserves the redox energy in a proton gradient. The polypeptide is NADH-quinone oxidoreductase subunit 8 (Paracoccus denitrificans).